A 3948-amino-acid polypeptide reads, in one-letter code: Hybrid PKS-NRPS synthetase fsa1 (3948 aa).

Residues 4 to 438 (SEPIAVIGSA…GTNAHAIIEA (435 aa)) form the Ketosynthase family 3 (KS3) domain. Active-site for beta-ketoacyl synthase activity residues include cysteine 177, histidine 316, and histidine 358. The tract at residues 543 to 846 (IFTGQGTQWP…LDTIEAISEG (304 aa)) is malonyl-CoA:ACP transacylase (MAT) domain. The segment at 931–1066 (HPLLGRRCHD…AQIKASLGTP (136 aa)) is N-terminal hotdog fold. The dehydratase (DH) domain stretch occupies residues 931–1233 (HPLLGRRCHD…MELVPFSPAT (303 aa)). In terms of domain architecture, PKS/mFAS DH spans 931–1235 (HPLLGRRCHD…LVPFSPATPA (305 aa)). The Proton acceptor; for dehydratase activity role is filled by histidine 964. A C-terminal hotdog fold region spans residues 1081 to 1235 (LRPVSVDRFY…LVPFSPATPA (155 aa)). Aspartate 1141 functions as the Proton donor; for dehydratase activity in the catalytic mechanism. The tract at residues 1381-1578 (YEQGFGLNLV…TTPPVHKILP (198 aa)) is methyltransferase (MT) domain. Residues 2105 to 2277 (TFLLIGLTGE…VAASSIDISS (173 aa)) form a ketoreductase (KR) domain region. The region spanning 2389-2464 (AIIKESFIVR…DLVDESLDLL (76 aa)) is the Carrier 1 domain. Serine 2424 carries the post-translational modification O-(pantetheine 4'-phosphoryl)serine. The segment at 2475–2555 (EAGNAHPAKP…TDNLTPPRTF (81 aa)) is disordered. 2 stretches are compositionally biased toward polar residues: residues 2487–2505 (VIPQ…QGTS) and 2513–2528 (GSDS…LTSW). Over residues 2529–2541 (DRQDLSPPDKSDD) the composition is skewed to basic and acidic residues. Positions 2542–2551 (APNSTDNLTP) are enriched in polar residues. Positions 2547-2976 (DNLTPPRTFP…TQVLLRSYLS (430 aa)) are condensation (C) domain. The interval 3000–3402 (LKVAVDAGKA…PDTFFGTSGT (403 aa)) is adenylation (A) (KR) domain. The 78-residue stretch at 3540 to 3617 (KSLTASEKRL…AMASVLEDCG (78 aa)) folds into the Carrier 2 domain. Serine 3577 carries the post-translational modification O-(pantetheine 4'-phosphoryl)serine. A reductase (RED) domain region spans residues 3653–3870 (LTGSSGYLGR…MPVNEIVEAI (218 aa)).

This sequence in the C-terminal section; belongs to the NRP synthetase family.

It carries out the reaction L-serine + 7 malonyl-CoA + acetyl-CoA + 2 S-adenosyl-L-methionine + ATP + 8 NADPH + 11 H(+) = (5S)-3-[(2E,6R,8E,10E,12E)-2,6-dimethyltetradeca-2,8,10,12-tetraenoyl]-5-(hydroxymethyl)pyrrolidine-2,4-dione + AMP + 2 S-adenosyl-L-homocysteine + 7 CO2 + diphosphate + 8 NADP(+) + 8 CoA + 6 H2O. It functions in the pathway mycotoxin biosynthesis. Hybrid PKS-NRPS synthetase; part of the gene cluster that mediates the biosynthesis of HIV-1 integrase inhibitor equisetin and of fusarisetin A, both trans-fused decalin-containing tetramic acids showing also antimicrobial activity. The PKS module of fsa1 together with the enoylreductase fsa3 catalyze the formation of the polyketide unit which is then conjugated to L-serine by the condensation domain of the fsa1 NRPS module. Activity of the Dieckmann cyclase domain (RED) results in release of the Dieckmann product intermediate. Diels-Alderase fsa2 is involved in endo-selective Diels-Alder cycloaddition to form the decalin ring, leading to the production of N-desmethylequisetin also called trichosetin. Subsequent N-methylation is carried out by fsa4 to give equisetin. The enzymatic gene responsible for the conversion of equisetin to fusarisetin A has not been identified yet and is probably located outside of the fsa cluster. The chain is Hybrid PKS-NRPS synthetase fsa1 from Fusarium sp. (strain FN080326).